We begin with the raw amino-acid sequence, 398 residues long: MEDDSLYLRGEWQFNHFSKLTSSRPDAAFAEIQRTSLPEKSPLSCETRVDLCDDLAPVARQLAPREKLPLSSRRPAAVGAGLQNMGNTCYVNASLQCLTYTPPLANYMLSREHSQTCHRHKGCMLCTMQAHITRALHNPGHVIQPSQALAAGFHRGKQEDAHEFLMFTVDAMKKACLPGHKQVDHHSKDTTLIHQIFGGYWRSQIKCLHCHGISDTFDPYLDIALDIQAAQSVQQALEQLVKPEELNGENAYHCGVCLQRAPASKTLTLHTSAKVLILVLKRFSDVTGNKIAKNVQYPECLDMQPYMSQQNTGPLVYVLYAVLVHAGWSCHNGHYFSYVKAQEGQWYKMDDAEVTASSITSVLSQQAYVLFYIQKSEWERHSESVSRGREPRALGSED.

One can recognise a USP domain in the interval Ala-80–Lys-375. Cys-89 (nucleophile) is an active-site residue. The active-site Proton acceptor is the His-334.

It belongs to the peptidase C19 family. USP17 subfamily.

It is found in the nucleus. The protein resides in the cytoplasm. The catalysed reaction is Thiol-dependent hydrolysis of ester, thioester, amide, peptide and isopeptide bonds formed by the C-terminal Gly of ubiquitin (a 76-residue protein attached to proteins as an intracellular targeting signal).. In terms of biological role, deubiquitinating enzyme that removes conjugated ubiquitin from specific proteins to regulate different cellular processes that may include cell proliferation, progression through the cell cycle, cell migration, and the cellular response to viral infection. Seems to be non-functional in the regulation of apoptosis. In Homo sapiens (Human), this protein is Ubiquitin carboxyl-terminal hydrolase 17-like protein 6 (USP17L6P).